We begin with the raw amino-acid sequence, 188 residues long: dCTP deaminase (188 aa).

DCTP-binding positions include 111–116 (KSTYAR), 135–137 (TLE), Q156, Y170, and Q180. The Proton donor/acceptor role is filled by E137.

Belongs to the dCTP deaminase family. As to quaternary structure, homotrimer.

The catalysed reaction is dCTP + H2O + H(+) = dUTP + NH4(+). Its pathway is pyrimidine metabolism; dUMP biosynthesis; dUMP from dCTP (dUTP route): step 1/2. Its function is as follows. Catalyzes the deamination of dCTP to dUTP. This is dCTP deaminase from Pseudomonas putida (strain ATCC 700007 / DSM 6899 / JCM 31910 / BCRC 17059 / LMG 24140 / F1).